Reading from the N-terminus, the 236-residue chain is MNNSVKEKIKGGLVVSCQALSNEPLHSSFIMSKMALAAVQSGAVGIRANTTKDIKAIEEQVDVPIIGIFKNEYEGSEVFITPTYKEVKEICESGAQIVAMDATTRLRPHGEKLDEIIKTVRKEFPNILLMADTSSLEDVKYADALGFDFIGTTLYGYTEATTGKNISDNQFAYLKEVLKSTTTPIIAEGKIDTPEKAREVLALGCYSVVVGGAITRPQEITKRFINEMKKDHLGKS.

This sequence belongs to the NanE family.

The enzyme catalyses an N-acyl-D-glucosamine 6-phosphate = an N-acyl-D-mannosamine 6-phosphate. Its pathway is amino-sugar metabolism; N-acetylneuraminate degradation; D-fructose 6-phosphate from N-acetylneuraminate: step 3/5. Converts N-acetylmannosamine-6-phosphate (ManNAc-6-P) to N-acetylglucosamine-6-phosphate (GlcNAc-6-P). The protein is Putative N-acetylmannosamine-6-phosphate 2-epimerase of Listeria welshimeri serovar 6b (strain ATCC 35897 / DSM 20650 / CCUG 15529 / CIP 8149 / NCTC 11857 / SLCC 5334 / V8).